Consider the following 224-residue polypeptide: Phosphoribosylformylglycinamidine synthase subunit PurQ (224 aa).

The 222-residue stretch at 3–224 (FGVVVFPGSN…GLLEKVVALA (222 aa)) folds into the Glutamine amidotransferase type-1 domain. Catalysis depends on Cys-86, which acts as the Nucleophile. Residues His-195 and Glu-197 contribute to the active site.

In terms of assembly, part of the FGAM synthase complex composed of 1 PurL, 1 PurQ and 2 PurS subunits.

The protein resides in the cytoplasm. The catalysed reaction is N(2)-formyl-N(1)-(5-phospho-beta-D-ribosyl)glycinamide + L-glutamine + ATP + H2O = 2-formamido-N(1)-(5-O-phospho-beta-D-ribosyl)acetamidine + L-glutamate + ADP + phosphate + H(+). The enzyme catalyses L-glutamine + H2O = L-glutamate + NH4(+). It participates in purine metabolism; IMP biosynthesis via de novo pathway; 5-amino-1-(5-phospho-D-ribosyl)imidazole from N(2)-formyl-N(1)-(5-phospho-D-ribosyl)glycinamide: step 1/2. Its function is as follows. Part of the phosphoribosylformylglycinamidine synthase complex involved in the purines biosynthetic pathway. Catalyzes the ATP-dependent conversion of formylglycinamide ribonucleotide (FGAR) and glutamine to yield formylglycinamidine ribonucleotide (FGAM) and glutamate. The FGAM synthase complex is composed of three subunits. PurQ produces an ammonia molecule by converting glutamine to glutamate. PurL transfers the ammonia molecule to FGAR to form FGAM in an ATP-dependent manner. PurS interacts with PurQ and PurL and is thought to assist in the transfer of the ammonia molecule from PurQ to PurL. The polypeptide is Phosphoribosylformylglycinamidine synthase subunit PurQ (Nostoc sp. (strain PCC 7120 / SAG 25.82 / UTEX 2576)).